Here is a 383-residue protein sequence, read N- to C-terminus: Putative F-box protein At1g77650 (383 aa).

The 47-residue stretch at 1–47 (MAFLSLPSDVVEEFLFKTPIESLVLCKPTCKQLYALCNDKRFIYNHL) folds into the F-box domain.

The polypeptide is Putative F-box protein At1g77650 (Arabidopsis thaliana (Mouse-ear cress)).